A 208-amino-acid chain; its full sequence is V-type ATP synthase subunit D (208 aa).

Belongs to the V-ATPase D subunit family.

Produces ATP from ADP in the presence of a proton gradient across the membrane. The sequence is that of V-type ATP synthase subunit D from Streptococcus pyogenes serotype M6 (strain ATCC BAA-946 / MGAS10394).